The following is a 207-amino-acid chain: N-(5'-phosphoribosyl)anthranilate isomerase (207 aa).

Belongs to the TrpF family.

The catalysed reaction is N-(5-phospho-beta-D-ribosyl)anthranilate = 1-(2-carboxyphenylamino)-1-deoxy-D-ribulose 5-phosphate. It functions in the pathway amino-acid biosynthesis; L-tryptophan biosynthesis; L-tryptophan from chorismate: step 3/5. This is N-(5'-phosphoribosyl)anthranilate isomerase from Petrotoga mobilis (strain DSM 10674 / SJ95).